We begin with the raw amino-acid sequence, 218 residues long: Imidazole glycerol phosphate synthase subunit HisH (218 aa).

Residues serine 7–alanine 211 form the Glutamine amidotransferase type-1 domain. Cysteine 82 (nucleophile) is an active-site residue. Residues histidine 186 and glutamate 188 contribute to the active site.

Heterodimer of HisH and HisF.

It is found in the cytoplasm. The catalysed reaction is 5-[(5-phospho-1-deoxy-D-ribulos-1-ylimino)methylamino]-1-(5-phospho-beta-D-ribosyl)imidazole-4-carboxamide + L-glutamine = D-erythro-1-(imidazol-4-yl)glycerol 3-phosphate + 5-amino-1-(5-phospho-beta-D-ribosyl)imidazole-4-carboxamide + L-glutamate + H(+). The enzyme catalyses L-glutamine + H2O = L-glutamate + NH4(+). The protein operates within amino-acid biosynthesis; L-histidine biosynthesis; L-histidine from 5-phospho-alpha-D-ribose 1-diphosphate: step 5/9. Its function is as follows. IGPS catalyzes the conversion of PRFAR and glutamine to IGP, AICAR and glutamate. The HisH subunit catalyzes the hydrolysis of glutamine to glutamate and ammonia as part of the synthesis of IGP and AICAR. The resulting ammonia molecule is channeled to the active site of HisF. This is Imidazole glycerol phosphate synthase subunit HisH from Shewanella sediminis (strain HAW-EB3).